We begin with the raw amino-acid sequence, 565 residues long: Protein priB (565 aa).

Residues 20 to 50 (CTTCRAAKMKCVGAEDGQRQCQRCKRANVQC) constitute a DNA-binding region (zn(2)-C6 fungal-type). Disordered stretches follow at residues 82 to 170 (AKSK…SDRA) and 195 to 224 (NPEDAPASGPSSVRCSETYSPPQSPAAPAG). A compositionally biased stretch (basic and acidic residues) spans 90 to 111 (DARHSSSYRDSHPSLGEPDDRY). The span at 129 to 155 (SNLPPLNLPSYPDAASEYTASSTSSRT) shows a compositional bias: low complexity. A compositionally biased stretch (polar residues) spans 203–215 (GPSSVRCSETYSP).

The protein resides in the nucleus. The sequence is that of Protein priB (priB) from Lentinula edodes (Shiitake mushroom).